Consider the following 278-residue polypeptide: Elongation factor Ts 1, mitochondrial (278 aa).

This sequence belongs to the EF-Ts family.

Its subcellular location is the mitochondrion. Its function is as follows. Associates with the EF-Tu.GDP complex and induces the exchange of GDP to GTP. It remains bound to the aminoacyl-tRNA.EF-Tu.GTP complex up to the GTP hydrolysis stage on the ribosome. This chain is Elongation factor Ts 1, mitochondrial, found in Trypanosoma cruzi (strain CL Brener).